The primary structure comprises 464 residues: ATP synthase subunit beta (464 aa).

ATP is bound at residue 154 to 161 (GGAGVGKT).

Belongs to the ATPase alpha/beta chains family. F-type ATPases have 2 components, CF(1) - the catalytic core - and CF(0) - the membrane proton channel. CF(1) has five subunits: alpha(3), beta(3), gamma(1), delta(1), epsilon(1). CF(0) has three main subunits: a(1), b(2) and c(9-12). The alpha and beta chains form an alternating ring which encloses part of the gamma chain. CF(1) is attached to CF(0) by a central stalk formed by the gamma and epsilon chains, while a peripheral stalk is formed by the delta and b chains.

The protein localises to the cell membrane. It catalyses the reaction ATP + H2O + 4 H(+)(in) = ADP + phosphate + 5 H(+)(out). Produces ATP from ADP in the presence of a proton gradient across the membrane. The catalytic sites are hosted primarily by the beta subunits. The polypeptide is ATP synthase subunit beta (Mycoplasmopsis synoviae (strain 53) (Mycoplasma synoviae)).